The sequence spans 328 residues: Ribosomal protein L11 methyltransferase (328 aa).

S-adenosyl-L-methionine contacts are provided by Thr153, Gly174, Asp196, and Asn263.

It belongs to the methyltransferase superfamily. PrmA family.

The protein resides in the cytoplasm. It catalyses the reaction L-lysyl-[protein] + 3 S-adenosyl-L-methionine = N(6),N(6),N(6)-trimethyl-L-lysyl-[protein] + 3 S-adenosyl-L-homocysteine + 3 H(+). In terms of biological role, methylates ribosomal protein L11. In Chloroflexus aurantiacus (strain ATCC 29366 / DSM 635 / J-10-fl), this protein is Ribosomal protein L11 methyltransferase.